Consider the following 110-residue polypeptide: Large ribosomal subunit protein uL22 (110 aa).

This sequence belongs to the universal ribosomal protein uL22 family. Part of the 50S ribosomal subunit.

Its function is as follows. This protein binds specifically to 23S rRNA; its binding is stimulated by other ribosomal proteins, e.g. L4, L17, and L20. It is important during the early stages of 50S assembly. It makes multiple contacts with different domains of the 23S rRNA in the assembled 50S subunit and ribosome. In terms of biological role, the globular domain of the protein is located near the polypeptide exit tunnel on the outside of the subunit, while an extended beta-hairpin is found that lines the wall of the exit tunnel in the center of the 70S ribosome. The chain is Large ribosomal subunit protein uL22 from Vibrio campbellii (strain ATCC BAA-1116).